The primary structure comprises 206 residues: LexA repressor (206 aa).

The segment at residues 29–49 (VREICEAVGLRSTSTVHGHLA) is a DNA-binding region (H-T-H motif). Catalysis depends on for autocatalytic cleavage activity residues serine 130 and lysine 167.

It belongs to the peptidase S24 family. As to quaternary structure, homodimer.

It carries out the reaction Hydrolysis of Ala-|-Gly bond in repressor LexA.. Functionally, represses a number of genes involved in the response to DNA damage (SOS response), including recA and lexA. In the presence of single-stranded DNA, RecA interacts with LexA causing an autocatalytic cleavage which disrupts the DNA-binding part of LexA, leading to derepression of the SOS regulon and eventually DNA repair. In Alkaliphilus oremlandii (strain OhILAs) (Clostridium oremlandii (strain OhILAs)), this protein is LexA repressor.